Reading from the N-terminus, the 64-residue chain is Conotoxin Ts-011 (64 aa).

Residues 1 to 22 (MHCLPVLVILLLLIASTPSVDA) form the signal peptide. A propeptide spanning residues 23 to 51 (RPKTKDDVPLASFHGADNANRILRTLWNL) is cleaved from the precursor. I63 is subject to Isoleucine amide.

It belongs to the conotoxin T superfamily. Post-translationally, contains 2 disulfide bonds that can be either 'C1-C3, C2-C4' or 'C1-C4, C2-C3', since these disulfide connectivities have been observed for conotoxins with cysteine framework V (for examples, see AC P0DQQ7 and AC P81755). Expressed by the venom duct.

The protein resides in the secreted. The polypeptide is Conotoxin Ts-011 (Conus tessulatus (Tessellate cone)).